A 207-amino-acid polypeptide reads, in one-letter code: Recombination protein RecR (207 aa).

The C4-type zinc-finger motif lies at 60-75 (CRRCHNISDSGVCTIC). A Toprim domain is found at 83-178 (STLCVVENIR…RVSVIARGIA (96 aa)).

Belongs to the RecR family.

In terms of biological role, may play a role in DNA repair. It seems to be involved in an RecBC-independent recombinational process of DNA repair. It may act with RecF and RecO. The chain is Recombination protein RecR from Porphyromonas gingivalis (strain ATCC 33277 / DSM 20709 / CIP 103683 / JCM 12257 / NCTC 11834 / 2561).